Reading from the N-terminus, the 261-residue chain is Phosphonates import ATP-binding protein PhnC (261 aa).

The ABC transporter domain maps to 15-257 (LCLENTSAVY…LERSAIPPKR (243 aa)). 48 to 55 (GPSGSGKS) contributes to the ATP binding site.

It belongs to the ABC transporter superfamily. Phosphonates importer (TC 3.A.1.9.1) family. As to quaternary structure, the complex is composed of two ATP-binding proteins (PhnC), two transmembrane proteins (PhnE) and a solute-binding protein (PhnD).

The protein resides in the cell inner membrane. It carries out the reaction phosphonate(out) + ATP + H2O = phosphonate(in) + ADP + phosphate + H(+). Functionally, part of the ABC transporter complex PhnCDE involved in phosphonates import. Responsible for energy coupling to the transport system. This Hyphomonas neptunium (strain ATCC 15444) protein is Phosphonates import ATP-binding protein PhnC.